We begin with the raw amino-acid sequence, 631 residues long: Phosphomethylpyrimidine synthase (631 aa).

Substrate contacts are provided by residues Asn-239, Met-268, Tyr-297, His-333, 353–355, 394–397, and Glu-433; these read SRG and DGLR. His-437 serves as a coordination point for Zn(2+). Residue Tyr-460 participates in substrate binding. A Zn(2+)-binding site is contributed by His-501. The [4Fe-4S] cluster site is built by Cys-581, Cys-584, and Cys-589.

Belongs to the ThiC family. Homodimer. Requires [4Fe-4S] cluster as cofactor.

It catalyses the reaction 5-amino-1-(5-phospho-beta-D-ribosyl)imidazole + S-adenosyl-L-methionine = 4-amino-2-methyl-5-(phosphooxymethyl)pyrimidine + CO + 5'-deoxyadenosine + formate + L-methionine + 3 H(+). It participates in cofactor biosynthesis; thiamine diphosphate biosynthesis. Functionally, catalyzes the synthesis of the hydroxymethylpyrimidine phosphate (HMP-P) moiety of thiamine from aminoimidazole ribotide (AIR) in a radical S-adenosyl-L-methionine (SAM)-dependent reaction. The sequence is that of Phosphomethylpyrimidine synthase from Citrobacter koseri (strain ATCC BAA-895 / CDC 4225-83 / SGSC4696).